The sequence spans 64 residues: RPNWEERSRLCGRDLIRAFIYLCGGTRWTRLPNFGNYPIMEEKMGFAKKCCAIGCSTEDFRMVC.

Cystine bridges form between C11–C51, C23–C64, and C50–C55.

This sequence belongs to the insulin family. Heterodimer of a B chain and an A chain linked by two disulfide bonds.

It is found in the secreted. The protein is Relaxin of Leucoraja erinaceus (Little skate).